The primary structure comprises 342 residues: Dihydroorotate dehydrogenase (quinone) (342 aa).

Residues 60–64 (AGLDK) and Thr-84 contribute to the FMN site. Lys-64 provides a ligand contact to substrate. 109–113 (NRMGF) is a binding site for substrate. Positions 137 and 170 each coordinate FMN. Residue Asn-170 participates in substrate binding. The Nucleophile role is filled by Ser-173. Asn-175 is a substrate binding site. Lys-215 and Thr-243 together coordinate FMN. 244–245 (NT) provides a ligand contact to substrate. Residues Gly-266, Gly-295, and 316–317 (YS) each bind FMN.

This sequence belongs to the dihydroorotate dehydrogenase family. Type 2 subfamily. Monomer. It depends on FMN as a cofactor.

It localises to the cell membrane. It catalyses the reaction (S)-dihydroorotate + a quinone = orotate + a quinol. It participates in pyrimidine metabolism; UMP biosynthesis via de novo pathway; orotate from (S)-dihydroorotate (quinone route): step 1/1. Functionally, catalyzes the conversion of dihydroorotate to orotate with quinone as electron acceptor. This Nitrosomonas eutropha (strain DSM 101675 / C91 / Nm57) protein is Dihydroorotate dehydrogenase (quinone).